The primary structure comprises 216 residues: CDP-diacylglycerol--glycerol-3-phosphate 3-phosphatidyltransferase (216 aa).

Transmembrane regions (helical) follow at residues 40-60 (VVSIASVLLFLFIACTDFLDG), 88-108 (VMLCLVADNFMPVFLFLCILY), 141-161 (MGAVLFSLLLKALYAFELAGA), and 176-196 (VVPVVLALASFFSYLKTFFPI).

Belongs to the CDP-alcohol phosphatidyltransferase class-I family.

The protein resides in the cell membrane. The enzyme catalyses a CDP-1,2-diacyl-sn-glycerol + sn-glycerol 3-phosphate = a 1,2-diacyl-sn-glycero-3-phospho-(1'-sn-glycero-3'-phosphate) + CMP + H(+). The protein operates within phospholipid metabolism; phosphatidylglycerol biosynthesis; phosphatidylglycerol from CDP-diacylglycerol: step 1/2. This protein catalyzes the committed step to the synthesis of the acidic phospholipids. In Treponema pallidum (strain Nichols), this protein is CDP-diacylglycerol--glycerol-3-phosphate 3-phosphatidyltransferase (pgsA).